The following is a 902-amino-acid chain: Methionine--tRNA ligase, cytoplasmic (902 aa).

The GST C-terminal domain maps to G74–P212. Residues P275 to N285 carry the 'HIGH' region motif. A 'KMSKS' region motif is present at residues K595 to S599. K598 contributes to the ATP binding site. A Phosphoserine modification is found at S827. A Phosphothreonine modification is found at T837. The WHEP-TRS domain occupies H843–K899.

It belongs to the class-I aminoacyl-tRNA synthetase family. Monomer. Part of a multisubunit complex that groups tRNA ligases for Arg (RARS1), Asp (DARS1), Gln (QARS1), Ile (IARS1), Leu (LARS1), Lys (KARS1), Met (MARS1) the bifunctional ligase for Glu and Pro (EPRS1) and the auxiliary subunits AIMP1/p43, AIMP2/p38 and EEF1E1/p18. Forms a linear complex that contains MARS1, EEF1E1, EPRS1 and AIMP2 that is at the core of the multisubunit complex.

It is found in the cytoplasm. The protein resides in the cytosol. Its subcellular location is the nucleus. The protein localises to the nucleolus. The catalysed reaction is tRNA(Met) + L-methionine + ATP = L-methionyl-tRNA(Met) + AMP + diphosphate. In terms of biological role, catalyzes the specific attachment of an amino acid to its cognate tRNA in a 2 step reaction: the amino acid (AA) is first activated by ATP to form AA-AMP and then transferred to the acceptor end of the tRNA. Plays a role in the synthesis of ribosomal RNA in the nucleolus. This chain is Methionine--tRNA ligase, cytoplasmic (Mars1), found in Mus musculus (Mouse).